Consider the following 156-residue polypeptide: Ribosomal RNA large subunit methyltransferase H (156 aa).

S-adenosyl-L-methionine is bound by residues L73, G104, and 123-128 (LSDLTL).

This sequence belongs to the RNA methyltransferase RlmH family. In terms of assembly, homodimer.

It localises to the cytoplasm. The catalysed reaction is pseudouridine(1915) in 23S rRNA + S-adenosyl-L-methionine = N(3)-methylpseudouridine(1915) in 23S rRNA + S-adenosyl-L-homocysteine + H(+). In terms of biological role, specifically methylates the pseudouridine at position 1915 (m3Psi1915) in 23S rRNA. In Methylibium petroleiphilum (strain ATCC BAA-1232 / LMG 22953 / PM1), this protein is Ribosomal RNA large subunit methyltransferase H.